The sequence spans 444 residues: Abhydrolase domain-containing protein abhd-5.2 (444 aa).

Residues 162–409 (PIVLIHGFGA…SAGHHVYADD (248 aa)) enclose the AB hydrolase-1 domain.

This sequence belongs to the peptidase S33 family. ABHD4/ABHD5 subfamily. In terms of assembly, interacts with atgl-1; the interaction tethers atgl-1 to lipid droplets. Expressed in the hypodermis and intestine.

The protein localises to the lipid droplet. Functionally, acts coordinately with phospholipase atgl-1 within the lipolytic cascade to distribute stored energy to tissues to maintain energy levels during the dauer phase. Localizes atgl-1 to lipid droplets, possibly to facilitate triglyceride hydrolysis. Regulates lipid droplet size, lipid content, the exchange of lipids between lipid droplets and fusion of lipid droplets during the dauer phase. The sequence is that of Abhydrolase domain-containing protein abhd-5.2 from Caenorhabditis elegans.